The sequence spans 432 residues: GRAM domain-containing protein 2B (432 aa).

Position 1 is an N-acetylmethionine (Met1). Disordered regions lie at residues 1–61 and 74–106; these read MTEL…SPDQ and DGAS…SSQY. Basic and acidic residues-rich tracts occupy residues 9 to 39 and 81 to 99; these read EDTK…EEKK and DKND…ERKK. The region spanning 110-177 is the GRAM domain; the sequence is MHFHKLFLSV…FSVTLIKKTK (68 aa). The span at 220–233 shows a compositional bias: polar residues; sequence TSVGNSPNPSSAEN. Positions 220-239 are disordered; it reads TSVGNSPNPSSAENSFRADR. 3 positions are modified to phosphoserine: Ser225, Ser242, and Ser252. Positions 262-285 are disordered; sequence RQDMEGYSSSGSQTPESENSRDFH. Positions 268 to 278 are enriched in polar residues; sequence YSSSGSQTPES.

The sequence is that of GRAM domain-containing protein 2B (GRAMD2B) from Homo sapiens (Human).